The sequence spans 741 residues: Fibrinogen alpha chain (741 aa).

An N-terminal signal peptide occupies residues 1 to 18 (MIPVTILCVLLCLNLAWA). Residue Q19 is modified to Pyrrolidone carboxylic acid. A coiled-coil region spans residues 67–506 (CCRMQGIIDD…STRRSYNGKD (440 aa)). The segment at 270–307 (VAEARGDSSPSHTGKLITSSHRRESPSLVDKTSSASSV) is disordered. Positions 277–288 (SSPSHTGKLITS) are enriched in polar residues. Cysteines 310 and 341 form a disulfide. Low complexity-rich tracts occupy residues 381–398 (STSS…HVTG) and 435–449 (SASH…SSSS). A disordered region spans residues 381 to 510 (STSSRHSIGS…SYNGKDCDDI (130 aa)). The segment covering 450–459 (FNKGGSTFET) has biased composition (polar residues). The Fibrinogen C-terminal domain occupies 498-739 (TRRSYNGKDC…VVRMKIRPLE (242 aa)). Positions 666, 668, 670, and 672 each coordinate Ca(2+). C674 and C687 form a disulfide bridge.

As to quaternary structure, heterohexamer; disulfide linked. Contains 2 sets of 3 non-identical chains (alpha, beta and gamma). The 2 heterotrimers are in head to head conformation with the N-termini in a small central domain. Conversion of fibrinogen to fibrin is triggered by thrombin, which cleaves fibrinopeptides A and B from alpha and beta chains, and thus exposes the N-terminal polymerization sites responsible for the formation of the soft clot. The soft clot is converted into the hard clot by factor XIIIA which catalyzes the epsilon-(gamma-glutamyl)lysine cross-linking between gamma chains (stronger) and between alpha chains (weaker) of different monomers. Post-translationally, forms F13A-mediated cross-links between a glutamine and the epsilon-amino group of a lysine residue, forming fibronectin-fibrinogen heteropolymers.

It localises to the secreted. In terms of biological role, cleaved by the protease thrombin to yield monomers which, together with fibrinogen beta (FGB) and fibrinogen gamma (FGG), polymerize to form an insoluble fibrin matrix. Fibrin has a major function in hemostasis as one of the primary components of blood clots. This Gallus gallus (Chicken) protein is Fibrinogen alpha chain (FGA).